Reading from the N-terminus, the 211-residue chain is Outer-membrane lipoprotein carrier protein (211 aa).

The signal sequence occupies residues Met1–Ala24.

Belongs to the LolA family. As to quaternary structure, monomer.

The protein localises to the periplasm. Functionally, participates in the translocation of lipoproteins from the inner membrane to the outer membrane. Only forms a complex with a lipoprotein if the residue after the N-terminal Cys is not an aspartate (The Asp acts as a targeting signal to indicate that the lipoprotein should stay in the inner membrane). In Coxiella burnetii (strain RSA 331 / Henzerling II), this protein is Outer-membrane lipoprotein carrier protein.